The following is a 407-amino-acid chain: Probable tRNA sulfurtransferase (407 aa).

Positions asparagine 61–valine 165 constitute a THUMP domain. ATP-binding positions include methionine 183 to leucine 184, histidine 208 to phenylalanine 209, arginine 265, glycine 287, and glutamine 296.

The protein belongs to the ThiI family.

It is found in the cytoplasm. It catalyses the reaction [ThiI sulfur-carrier protein]-S-sulfanyl-L-cysteine + a uridine in tRNA + 2 reduced [2Fe-2S]-[ferredoxin] + ATP + H(+) = [ThiI sulfur-carrier protein]-L-cysteine + a 4-thiouridine in tRNA + 2 oxidized [2Fe-2S]-[ferredoxin] + AMP + diphosphate. The catalysed reaction is [ThiS sulfur-carrier protein]-C-terminal Gly-Gly-AMP + S-sulfanyl-L-cysteinyl-[cysteine desulfurase] + AH2 = [ThiS sulfur-carrier protein]-C-terminal-Gly-aminoethanethioate + L-cysteinyl-[cysteine desulfurase] + A + AMP + 2 H(+). It participates in cofactor biosynthesis; thiamine diphosphate biosynthesis. Functionally, catalyzes the ATP-dependent transfer of a sulfur to tRNA to produce 4-thiouridine in position 8 of tRNAs, which functions as a near-UV photosensor. Also catalyzes the transfer of sulfur to the sulfur carrier protein ThiS, forming ThiS-thiocarboxylate. This is a step in the synthesis of thiazole, in the thiamine biosynthesis pathway. The sulfur is donated as persulfide by IscS. The polypeptide is Probable tRNA sulfurtransferase (Staphylococcus aureus (strain NCTC 8325 / PS 47)).